The sequence spans 772 residues: Subtilisin-like protease SBT5.3 (772 aa).

The N-terminal stretch at 1–25 (MKLTHNFSFLLLLLLVHMSSKHILA) is a signal peptide. An Inhibitor I9 domain is found at 31–116 (SYVVYFGAHS…VFPNKALKLH (86 aa)). One can recognise a Peptidase S8 domain in the interval 120 to 628 (SWDFLGLEHN…AGHVQPNLAV (509 aa)). Residue Asp153 is the Charge relay system of the active site. The N-linked (GlcNAc...) asparagine glycan is linked to Asn211. His223 serves as the catalytic Charge relay system. N-linked (GlcNAc...) asparagine glycans are attached at residues Asn246, Asn306, and Asn396. Residues 398-480 (SALDAQLCKL…KDSFAVSRYI (83 aa)) enclose the PA domain. Ser561 serves as the catalytic Charge relay system. 5 N-linked (GlcNAc...) asparagine glycosylation sites follow: Asn606, Asn651, Asn662, Asn684, and Asn725.

It belongs to the peptidase S8 family. In terms of tissue distribution, expressed specifically at sites of lateral root emergence.

The protein localises to the secreted. It localises to the cell wall. Its function is as follows. Serine protease. Has a substrate preference for the hydrophobic residues Phe and Ala and the basic residue Asp in the P1 position, and for Asp, Leu or Ala in the P1' position. May play a role in the degradation of structural proteins in the extracellular matrix of cells located above sites of lateral root formation and thus facilitate lateral root emergence. This Arabidopsis thaliana (Mouse-ear cress) protein is Subtilisin-like protease SBT5.3 (AIR3).